Here is a 392-residue protein sequence, read N- to C-terminus: Formate-dependent phosphoribosylglycinamide formyltransferase (392 aa).

Residues 22–23 (EL) and glutamate 82 each bind N(1)-(5-phospho-beta-D-ribosyl)glycinamide. Residues arginine 114, lysine 155, 160–165 (SSGKGQ), 195–198 (EGVV), and glutamate 203 contribute to the ATP site. An ATP-grasp domain is found at 119-308 (RLAAEELWVP…EFALHVRAFL (190 aa)). Mg(2+) is bound by residues glutamate 267 and glutamate 279. Residues aspartate 286, lysine 355, and 362 to 363 (RR) contribute to the N(1)-(5-phospho-beta-D-ribosyl)glycinamide site.

This sequence belongs to the PurK/PurT family. Homodimer.

The enzyme catalyses N(1)-(5-phospho-beta-D-ribosyl)glycinamide + formate + ATP = N(2)-formyl-N(1)-(5-phospho-beta-D-ribosyl)glycinamide + ADP + phosphate + H(+). It participates in purine metabolism; IMP biosynthesis via de novo pathway; N(2)-formyl-N(1)-(5-phospho-D-ribosyl)glycinamide from N(1)-(5-phospho-D-ribosyl)glycinamide (formate route): step 1/1. In terms of biological role, involved in the de novo purine biosynthesis. Catalyzes the transfer of formate to 5-phospho-ribosyl-glycinamide (GAR), producing 5-phospho-ribosyl-N-formylglycinamide (FGAR). Formate is provided by PurU via hydrolysis of 10-formyl-tetrahydrofolate. This is Formate-dependent phosphoribosylglycinamide formyltransferase from Erwinia tasmaniensis (strain DSM 17950 / CFBP 7177 / CIP 109463 / NCPPB 4357 / Et1/99).